Here is a 257-residue protein sequence, read N- to C-terminus: Hydroxyethylthiazole kinase 1 (257 aa).

Met41 lines the substrate pocket. Residues Lys117 and Thr162 each coordinate ATP. Gly189 is a substrate binding site.

The protein belongs to the Thz kinase family. The cofactor is Mg(2+).

It catalyses the reaction 5-(2-hydroxyethyl)-4-methylthiazole + ATP = 4-methyl-5-(2-phosphooxyethyl)-thiazole + ADP + H(+). The protein operates within cofactor biosynthesis; thiamine diphosphate biosynthesis; 4-methyl-5-(2-phosphoethyl)-thiazole from 5-(2-hydroxyethyl)-4-methylthiazole: step 1/1. Functionally, catalyzes the phosphorylation of the hydroxyl group of 4-methyl-5-beta-hydroxyethylthiazole (THZ). The sequence is that of Hydroxyethylthiazole kinase 1 from Oceanobacillus iheyensis (strain DSM 14371 / CIP 107618 / JCM 11309 / KCTC 3954 / HTE831).